The following is a 215-amino-acid chain: Adenylate kinase (215 aa).

10 to 15 contacts ATP; it reads GCGKGT. The interval 30 to 59 is NMP; the sequence is STGDIFRQTIDQKGPYWEELKSYISKGLLV. AMP is bound by residues threonine 31, arginine 36, 57 to 59, and glutamine 91; that span reads LLV. The interval 120–157 is LID; that stretch reads GRRICSKCKRIYNIHYSAPKKEDICDDDGEFLIQRKDD. Arginine 121 lines the ATP pocket. Positions 124 and 127 each coordinate Zn(2+). 130–131 contacts ATP; it reads IY. Zn(2+)-binding residues include cysteine 144 and aspartate 147. 2 residues coordinate AMP: arginine 154 and arginine 165.

This sequence belongs to the adenylate kinase family. Monomer.

The protein localises to the cytoplasm. The catalysed reaction is AMP + ATP = 2 ADP. Its pathway is purine metabolism; AMP biosynthesis via salvage pathway; AMP from ADP: step 1/1. Catalyzes the reversible transfer of the terminal phosphate group between ATP and AMP. Plays an important role in cellular energy homeostasis and in adenine nucleotide metabolism. This chain is Adenylate kinase, found in Malacoplasma penetrans (strain HF-2) (Mycoplasma penetrans).